Here is a 623-residue protein sequence, read N- to C-terminus: Leucine aminopeptidase 2 (623 aa).

A peptide is bound by residues 136–138 (QCE) and 261–266 (PYGGME). Position 290 (H290) interacts with Zn(2+). E291 functions as the Proton acceptor in the catalytic mechanism. 2 residues coordinate Zn(2+): H294 and E313. Y391 functions as the Proton donor in the catalytic mechanism.

The protein belongs to the peptidase M1 family. Zn(2+) serves as cofactor.

It is found in the cytoplasm. The protein localises to the nucleus. It catalyses the reaction an epoxide + H2O = an ethanediol. Functionally, aminopeptidase that preferentially cleaves di- and tripeptides. Also has low epoxide hydrolase activity (in vitro). Can hydrolyze the epoxide leukotriene LTA(4) but it forms preferentially 5,6-dihydroxy-7,9,11,14-eicosatetraenoic acid rather than the cytokine leukotriene B(4) as the product compared to the homologous mammalian enzyme (in vitro). The chain is Leucine aminopeptidase 2 (LKH1) from Candida albicans (strain SC5314 / ATCC MYA-2876) (Yeast).